The primary structure comprises 678 residues: Probable E3 ubiquitin ligase complex SCF subunit sconB (678 aa).

The interval 1 to 52 (MSTEDNHDSQILTARHRSDASEQSFKSLFGGPSSEDGKETEPDTHDHNHSFS) is disordered. Residues 35 to 49 (EDGKETEPDTHDHNH) are compositionally biased toward basic and acidic residues. One can recognise an F-box domain in the interval 178 to 224 (IDFITALPPEIAFKILCYLDTTSLCKASQVSRGWRALADDDVVWHRM). The tract at residues 266 to 287 (VVGPRSPDASAESPPSGKRKLE) is disordered. WD repeat units lie at residues 347 to 375 (GHTN…KIWD), 387 to 415 (GHES…KVWN), 427 to 455 (GHRG…KIWN), 466 to 496 (GHTD…RLWD), 508 to 543 (GHVG…TSGD), 553 to 595 (MGLE…RLWE), 607 to 635 (GHLE…KIWD), and 647 to 675 (GHSG…RMYS).

This sequence belongs to the WD repeat MET30/SCONB/SCON-2 family. As to quaternary structure, component of the SCF(sconB) E3 ubiquitin ligase complex.

Its pathway is protein modification; protein ubiquitination. Its function is as follows. Component of the SCF(sconB) E3 ubiquitin ligase complex involved in the regulation of sulfur metabolite repression, probably by mediating the inactivation or degradation of the metR transcription factor. The protein is Probable E3 ubiquitin ligase complex SCF subunit sconB (sconB) of Emericella nidulans (strain FGSC A4 / ATCC 38163 / CBS 112.46 / NRRL 194 / M139) (Aspergillus nidulans).